Reading from the N-terminus, the 595-residue chain is DNA-binding protein REB1 (595 aa).

Basic and acidic residues-rich tracts occupy residues 25-46 (KSGE…KEQD) and 54-71 (DPGR…RDAN). The segment at 25–208 (KSGEDDAVNK…IDDHVDDVSV (184 aa)) is disordered. Low complexity predominate over residues 75-84 (AVAAAAVAAA). Over residues 114–123 (KKSKKNKNKL) the composition is skewed to basic residues. Positions 163 to 176 (NIASQHPDFQQYLN) are enriched in polar residues. Over residues 182–205 (EPKKEKSEERSYGDLSNIDDHVDD) the composition is skewed to basic and acidic residues. Residues 333–384 (HIFEQRGKWTPEEDAELARWCAEKEGQWSNIGKVLGRMPEDCRDRWRNYVKC) enclose the HTH myb-type domain. Positions 360–382 (WSNIGKVLGRMPEDCRDRWRNYV) form a DNA-binding region, H-T-H motif. The region spanning 385–490 (GPNRAANKWS…QCRYKWNKLL (106 aa)) is the Myb-like domain. The segment at 414 to 456 (TAYEDGEDDEMKDSSTKIEDSGDADMLDVQDSDKKPSISNSKK) is disordered. Residues 434-443 (SGDADMLDVQ) show a composition bias toward acidic residues.

Its subcellular location is the nucleus. In terms of biological role, DNA-binding protein that recognizes sites within both the enhancer and the promoter of rRNA transcription, as well as upstream of many genes transcribed by RNA polymerase II. It is essential for cell growth. May stimulate or inhibit transcription. Specifically recognizes the sequence 5'-CCGGGTA-3' or 5'-CGGGTRR-3' (where R is any purine). This is DNA-binding protein REB1 (REB1) from Kluyveromyces lactis (strain ATCC 8585 / CBS 2359 / DSM 70799 / NBRC 1267 / NRRL Y-1140 / WM37) (Yeast).